The sequence spans 181 residues: Ribosome maturation factor RimM (181 aa).

The region spanning 98-177 (EGEFFYCDLI…KITTHNAKTL (80 aa)) is the PRC barrel domain.

This sequence belongs to the RimM family. In terms of assembly, binds ribosomal protein uS19.

It is found in the cytoplasm. Its function is as follows. An accessory protein needed during the final step in the assembly of 30S ribosomal subunit, possibly for assembly of the head region. Essential for efficient processing of 16S rRNA. May be needed both before and after RbfA during the maturation of 16S rRNA. It has affinity for free ribosomal 30S subunits but not for 70S ribosomes. In Helicobacter pylori (strain J99 / ATCC 700824) (Campylobacter pylori J99), this protein is Ribosome maturation factor RimM.